We begin with the raw amino-acid sequence, 194 residues long: Putative manganese efflux pump MntP (194 aa).

The next 6 membrane-spanning stretches (helical) occupy residues 3–23 (FYATIILALALSMDAFAVAVC), 40–60 (GFIFGIIEASTPIIGWALGLY), 65–85 (IIQWDHWVAFGLLVILGGRMI), 109–129 (LIATGIATSLDAMAIGVGLAF), 134–154 (IVHTAMTIGMMTMIMATLGML), and 169–189 (IIGGMVLIAIGFNILFEHLDL).

It belongs to the MntP (TC 9.B.29) family.

Its subcellular location is the cell inner membrane. Functionally, probably functions as a manganese efflux pump. In Proteus mirabilis (strain HI4320), this protein is Putative manganese efflux pump MntP.